A 148-amino-acid chain; its full sequence is 3-hydroxyacyl-[acyl-carrier-protein] dehydratase FabZ (148 aa).

The active site involves histidine 49.

This sequence belongs to the thioester dehydratase family. FabZ subfamily.

It localises to the cytoplasm. It carries out the reaction a (3R)-hydroxyacyl-[ACP] = a (2E)-enoyl-[ACP] + H2O. Its function is as follows. Involved in unsaturated fatty acids biosynthesis. Catalyzes the dehydration of short chain beta-hydroxyacyl-ACPs and long chain saturated and unsaturated beta-hydroxyacyl-ACPs. The chain is 3-hydroxyacyl-[acyl-carrier-protein] dehydratase FabZ from Ehrlichia canis (strain Jake).